The following is a 262-amino-acid chain: Hemin import ATP-binding protein HmuV (262 aa).

Residues 3 to 244 form the ABC transporter domain; that stretch reads LQARNLTLAR…DHMRRVYGIE (242 aa). 35-42 is a binding site for ATP; it reads GANGAGKS.

It belongs to the ABC transporter superfamily. Heme (hemin) importer (TC 3.A.1.14.5) family. In terms of assembly, the complex is composed of two ATP-binding proteins (HmuV), two transmembrane proteins (HmuU) and a solute-binding protein (HmuT).

It is found in the cell inner membrane. Part of the ABC transporter complex HmuTUV involved in hemin import. Responsible for energy coupling to the transport system. This Bordetella bronchiseptica (strain ATCC BAA-588 / NCTC 13252 / RB50) (Alcaligenes bronchisepticus) protein is Hemin import ATP-binding protein HmuV.